Consider the following 702-residue polypeptide: Pentatricopeptide repeat-containing protein At4g16390, chloroplastic (702 aa).

The transit peptide at 1-53 directs the protein to the chloroplast; that stretch reads MSFHHLCSSPSSLLHDPLPLCNLLSVYPKSTPRSFLSSYNPNSSHFHSRNLLQ. PPR repeat units follow at residues 174–208, 209–243, 244–278, 279–313, 314–348, 349–383, 384–414, 420–454, and 455–489; these read EVIL…GIKP, DNAT…GCEP, DNVT…KWRI, DAVT…GVKP, NLVI…GFTP, NWST…GLSL, TVIL…MKNC, DSWT…GFEP, and TLFV…GITP. The Smr domain maps to 603–688; sequence LHLKSLSLGA…WFLTTSVAAK (86 aa).

The protein belongs to the PPR family. P subfamily. In terms of tissue distribution, expressed in leaves and flowers and at lower levels in stems and flower buds.

Its subcellular location is the plastid. It localises to the chloroplast. Involved in chloroplast RNA processing. Can bind RNA. Involved in chloroplast development. Involved in chloroplast ribosomal RNA (rRNA) processing and/or translation. Required for FtsH-mediated chloroplast biogenesis. Involved in translation and accumulation of chloroplast ATP synthase subunits. This is Pentatricopeptide repeat-containing protein At4g16390, chloroplastic from Arabidopsis thaliana (Mouse-ear cress).